A 137-amino-acid polypeptide reads, in one-letter code: UPF0768 protein C1952.04c (137 aa).

Basic and acidic residues predominate over residues 79 to 93 (QRRRREDLPTPERPE). The interval 79–137 (QRRRREDLPTPERPEASAQQHAFFPGSSSQQTDIPNVRPQPHIPPPRKSDEAPPPYSYK) is disordered. Residues 119 to 137 (PHIPPPRKSDEAPPPYSYK) show a composition bias toward pro residues.

This sequence belongs to the UPF0768 family.

The polypeptide is UPF0768 protein C1952.04c (Schizosaccharomyces pombe (strain 972 / ATCC 24843) (Fission yeast)).